The primary structure comprises 166 residues: Small ribosomal subunit protein uS5 (166 aa).

One can recognise an S5 DRBM domain in the interval 11–74 (LQEKLIAVNR…EKARRNMINV (64 aa)).

Belongs to the universal ribosomal protein uS5 family. As to quaternary structure, part of the 30S ribosomal subunit. Contacts proteins S4 and S8.

Its function is as follows. With S4 and S12 plays an important role in translational accuracy. Located at the back of the 30S subunit body where it stabilizes the conformation of the head with respect to the body. The protein is Small ribosomal subunit protein uS5 of Actinobacillus succinogenes (strain ATCC 55618 / DSM 22257 / CCUG 43843 / 130Z).